We begin with the raw amino-acid sequence, 1124 residues long: tRNA (34-2'-O)-methyltransferase regulator WDR6 (1124 aa).

M1 is modified (N-acetylmethionine). 19 WD repeats span residues 53–97 (MKRV…IVKI), 105–143 (RELW…LYDP), 147–189 (CSLQ…VWYP), 200–238 (VPDR…IWKV), 247–285 (RVQN…VWSH), 289–327 (ILQA…LWHL), 335–376 (SGVF…LYDL), 381–422 (WEQL…VVPI), 425–470 (PTAA…ISAA), 476–520 (IFVK…LYPS), 557–596 (PMST…FVRG), 602–640 (VLRQ…VWSP), 643–682 (HEKL…LYRA), 743–789 (LIDI…VWGV), 852–897 (RHRH…LFLL), 905–950 (QLLA…FWDL), 974–1015 (GSPC…VFVL), 1039–1076 (EEYS…FWRL), and 1082–1124 (TFMN…NWYD).

The protein belongs to the WD repeat WDR6 family. In terms of assembly, interacts with FTSJ1; the interaction is direct, and required for 2'-O-methylation of position 34 in substrate tRNAs. Interacts with IRS4. Interacts with STK11/LKB1.

The protein resides in the cytoplasm. Functionally, together with methyltransferase FTSJ1, methylates the 2'-O-ribose of nucleotides at position 34 of the tRNA anticodon loop of substrate tRNAs. Required for the correct positioning of the substrate tRNA for methylation. Required to suppress amino acid starvation-induced autophagy. Enhances the STK11/LKB1-induced cell growth suppression activity. In Bos taurus (Bovine), this protein is tRNA (34-2'-O)-methyltransferase regulator WDR6 (WDR6).